A 698-amino-acid chain; its full sequence is MRLAVGALLVCAVLGLCLAVPDKTVRWCAVSEHEATKCQSFRDHMKSVIPSDGPSVACVKKASYLDCIRAIAANEADAVTLDAGLVYDAYLAPNNLKPVVAEFYGSKEDPQTFYYAVAVVKKDSGFQMNQLRGKKSCHTGLGRSAGWNIPIGLLYCDLPEPRKPLEKAVANFFSGSCAPCADGTDFPQLCQLCPGCGCSTLNQYFGYSGAFKCLKDGAGDVAFVKHSTIFENLANKADRDQYELLCLDNTRKPVDEYKDCHLAQVPSHTVVARSMGGKEDLIWELLNQAQEHFGKDKSKEFQLFSSPHGKDLLFKDSAHGFLKVPPRMDAKMYLGYEYVTAIRNLREGTCPEAPTDECKPVKWCALSHHERLKCDEWSVNSVGKIECVSAETTEDCIAKIMNGEADAMSLDGGFVYIAGKCGLVPVLAENYNKSDNCEDTPEAGYFAIAVVKKSASDLTWDNLKGKKSCHTAVGRTAGWNIPMGLLYNKINHCRFDEFFSEGCAPGSKKDSSLCKLCMGSGLNLCEPNNKEGYYGYTGAFRCLVEKGDVAFVKHQTVPQNTGGKNPDPWAKNLNEKDYELLCLDGTRKPVEEYANCHLARAPNHAVVTRKDKEACVHKILRQQQHLFGSNVTDCSGNFCLFRSETKDLLFRDDTVCLAKLHDRNTYEKYLGEEYVKAVGNLRKCSTSSLLEACTFRRP.

An N-terminal signal peptide occupies residues 1–19 (MRLAVGALLVCAVLGLCLA). Transferrin-like domains are found at residues 25-347 (VRWC…NLRE) and 361-683 (VKWC…NLRK). Disulfide bonds link Cys-28/Cys-67 and Cys-38/Cys-58. The residue at position 42 (Arg-42) is a Dimethylated arginine. A glycan (O-linked (GalNAc...) serine) is linked at Ser-51. Fe(3+)-binding residues include Asp-82 and Tyr-114. 17 cysteine pairs are disulfide-bonded: Cys-137–Cys-213, Cys-156–Cys-350, Cys-177–Cys-193, Cys-180–Cys-198, Cys-190–Cys-196, Cys-246–Cys-260, Cys-358–Cys-615, Cys-364–Cys-396, Cys-374–Cys-387, Cys-421–Cys-693, Cys-437–Cys-656, Cys-469–Cys-542, Cys-493–Cys-684, Cys-503–Cys-517, Cys-514–Cys-525, Cys-582–Cys-596, and Cys-634–Cys-639. Positions 139, 143, 145, and 146 each coordinate hydrogencarbonate. Tyr-207 is a Fe(3+) binding site. His-268 is a Fe(3+) binding site. The residue at position 389 (Ser-389) is a Phosphoserine; by FAM20C. Asp-411 contacts Fe(3+). The N-linked (GlcNAc...) (complex) asparagine glycan is linked to Asn-432. Tyr-445 is a Fe(3+) binding site. The hydrogencarbonate site is built by Thr-471, Arg-475, Ala-477, and Gly-478. N-linked (GlcNAc...) asparagine; atypical; partial glycosylation occurs at Asn-491. Residue Tyr-536 participates in Fe(3+) binding. His-604 is a Fe(3+) binding site. An N-linked (GlcNAc...) (complex) asparagine glycan is attached at Asn-630. Ser-685 carries the phosphoserine; by FAM20C modification.

This sequence belongs to the transferrin family. In terms of assembly, monomer. Part of a complex composed of SLC40A1/ferroportin, TF/transferrin and HEPH/hephaestin that transfers iron from cells to transferrin. (Microbial infection) Binds to Neisseria transferrin-binding protein A (tbpA or tbp1). Forms a large complex with TbpA and TbpB. As to quaternary structure, (Microbial infection) Binds to Neisseria transferrin-binding protein B (tbpb or tbp2). Expressed by the liver and secreted in plasma.

It is found in the secreted. In terms of biological role, transferrins are iron binding transport proteins which can bind two Fe(3+) ions in association with the binding of an anion, usually bicarbonate. It is responsible for the transport of iron from sites of absorption and heme degradation to those of storage and utilization. Serum transferrin may also have a further role in stimulating cell proliferation. (Microbial infection) Serves as an iron source for Neisseria species, which capture the protein and extract its iron for their own use. Its function is as follows. (Microbial infection) Serves as an iron source for parasite T.brucei (strain 427), which capture TF via its own transferrin receptor ESAG6:ESAG7 and extract its iron for its own use. This Homo sapiens (Human) protein is Serotransferrin.